Consider the following 564-residue polypeptide: Proline--tRNA ligase (564 aa).

It belongs to the class-II aminoacyl-tRNA synthetase family. ProS type 1 subfamily. Homodimer.

Its subcellular location is the cytoplasm. The enzyme catalyses tRNA(Pro) + L-proline + ATP = L-prolyl-tRNA(Pro) + AMP + diphosphate. In terms of biological role, catalyzes the attachment of proline to tRNA(Pro) in a two-step reaction: proline is first activated by ATP to form Pro-AMP and then transferred to the acceptor end of tRNA(Pro). As ProRS can inadvertently accommodate and process non-cognate amino acids such as alanine and cysteine, to avoid such errors it has two additional distinct editing activities against alanine. One activity is designated as 'pretransfer' editing and involves the tRNA(Pro)-independent hydrolysis of activated Ala-AMP. The other activity is designated 'posttransfer' editing and involves deacylation of mischarged Ala-tRNA(Pro). The misacylated Cys-tRNA(Pro) is not edited by ProRS. The protein is Proline--tRNA ligase of Xanthomonas campestris pv. campestris (strain 8004).